A 263-amino-acid polypeptide reads, in one-letter code: Protein PUN1 (263 aa).

Over 1–6 the chain is Cytoplasmic; the sequence is MRNFFT. The chain crosses the membrane as a helical span at residues 7 to 27; the sequence is LFFAAIFSLGALILAIVACAG. Residues 28–143 lie on the Extracellular side of the membrane; it reads STKNYSPINK…MTYYNNLVKC (116 aa). Asn-100 is a glycosylation site (N-linked (GlcNAc...) asparagine). Residues 144-164 form a helical membrane-spanning segment; the sequence is MFITILIGIVLTFVNLVFNVL. At 165 to 172 the chain is on the cytoplasmic side; the sequence is RWIIHIRP. The chain crosses the membrane as a helical span at residues 173–193; that stretch reads LTWFGAFFSFFAFAALLVSIG. At 194 to 223 the chain is on the extracellular side; that stretch reads SCLGTYSYIKYILKHNYSDYGISMSIGRNY. Residue Asn-209 is glycosylated (N-linked (GlcNAc...) asparagine). The chain crosses the membrane as a helical span at residues 224–244; sequence QGLMWGAVVGALLNFILWCSV. Over 245-263 the chain is Cytoplasmic; that stretch reads RSRPTVIYANAPIEEKPLI. Lys-260 participates in a covalent cross-link: Glycyl lysine isopeptide (Lys-Gly) (interchain with G-Cter in ubiquitin).

It belongs to the SUR7 family. In terms of processing, N-glycosylated.

Its subcellular location is the cell membrane. Functionally, contributes to the wild-type cellular response to nitrogen stress through signaling pathways that regulate the expression of genes involved in amino acid biosynthesis. Required for wild-type filamentous growth, cell growth, and cell-cell adhesion. This Saccharomyces cerevisiae (strain ATCC 204508 / S288c) (Baker's yeast) protein is Protein PUN1 (PUN1).